The chain runs to 379 residues: Cytochrome b (379 aa).

The next 4 membrane-spanning stretches (helical) occupy residues 33 to 53 (FGSLLGLCLISQILTGLFLAM), 77 to 98 (WLIRNLHANGASFFFICLYLHI), 113 to 133 (WNIGVVLFLLVMMTAFVGYVL), and 178 to 198 (FFAFHFLFPFVVAGATMIHLL). Heme b-binding residues include H83 and H97. Heme b-binding residues include H182 and H196. An a ubiquinone-binding site is contributed by H201. Transmembrane regions (helical) follow at residues 226-246 (YKDLLGFIIMLTALTMLALFY), 288-308 (LGGVLALLSSILVLMVVPILH), 320-340 (ASQLLFWILVADMLVLTWIGG), and 347-367 (YIIIGQVASVLYFSLFLVLNP).

It belongs to the cytochrome b family. As to quaternary structure, the cytochrome bc1 complex contains 3 respiratory subunits (MT-CYB, CYC1 and UQCRFS1), 2 core proteins (UQCRC1 and UQCRC2) and probably 6 low-molecular weight proteins. The cofactor is heme b.

It is found in the mitochondrion inner membrane. In terms of biological role, component of the ubiquinol-cytochrome c reductase complex (complex III or cytochrome b-c1 complex) that is part of the mitochondrial respiratory chain. The b-c1 complex mediates electron transfer from ubiquinol to cytochrome c. Contributes to the generation of a proton gradient across the mitochondrial membrane that is then used for ATP synthesis. The chain is Cytochrome b (mt-cyb) from Anguilla reinhardtii (Speckled longfin eel).